The chain runs to 786 residues: Signal transducer and activator of transcription 5B (786 aa).

Residue tyrosine 90 is modified to Phosphotyrosine. Serine 128 bears the Phosphoserine mark. An SH2 domain is found at 589–686 (WNDGAILGFV…EVYSKYYTPV (98 aa)). Tyrosine 682 and tyrosine 699 each carry phosphotyrosine.

Belongs to the transcription factor STAT family. As to quaternary structure, upon activation, forms a homodimer or a heterodimer with a related family member. Binds NR3C1. Interacts with NCOA1. Interacts with NMI. Interacts with SOCS7. Interacts (via SH2 domain) with INSR. Interacts with CPEB3; this inhibits STAT5B-mediated transcriptional activation. In terms of processing, tyrosine phosphorylated in response to signaling via activated KIT, resulting in translocation to the nucleus. Tyrosine phosphorylated in response to signaling via activated FLT3; wild-type FLT3 results in much weaker phosphorylation than constitutively activated mutant FLT3. Alternatively, can be phosphorylated by JAK2. Phosphorylation at Tyr-699 by PTK6 or HCK leads to an increase of its transcriptional activity.

It is found in the cytoplasm. The protein resides in the nucleus. In terms of biological role, carries out a dual function: signal transduction and activation of transcription. Mediates cellular responses to the cytokine KITLG/SCF and other growth factors. Binds to the GAS element and activates PRL-induced transcription. Positively regulates hematopoietic/erythroid differentiation. The protein is Signal transducer and activator of transcription 5B (Stat5b) of Rattus norvegicus (Rat).